We begin with the raw amino-acid sequence, 152 residues long: MNLNDIALTGLIVLMLAFAVYDEFVVNFLKGKTHLQIKLKRKHKIDALIFIILILIVVYNNITVYGSRLTTYLLLFTILVTIYIAYIRSPKLFFKNNGFFYANTFISYSRIKTMNLSEDGILVIGLENKKLYISVSQIDDLERIYKFLIENR.

The next 3 membrane-spanning stretches (helical) occupy residues 6–26 (IALT…EFVV), 45–65 (IDAL…ITVY), and 67–87 (SRLT…IAYI).

It belongs to the UPF0266 family.

Its subcellular location is the cell inner membrane. The polypeptide is UPF0266 membrane protein plu2700 (Photorhabdus laumondii subsp. laumondii (strain DSM 15139 / CIP 105565 / TT01) (Photorhabdus luminescens subsp. laumondii)).